The sequence spans 93 residues: MLLKLQIQLFASKKGAGSTRNGRDSHSKRLGAKLSDGQIAKAGSIIYRQRGTKIYPGFNVGLGGDDTLFAKISGIIKYESKRGNRKKVSVYPQ.

A propeptide spanning residues 1 to 10 (MLLKLQIQLF) is cleaved from the precursor.

Belongs to the bacterial ribosomal protein bL27 family. In terms of processing, the N-terminus is cleaved by ribosomal processing cysteine protease Prp.

This Phytoplasma australiense protein is Large ribosomal subunit protein bL27.